The sequence spans 100 residues: Aspartyl/glutamyl-tRNA(Asn/Gln) amidotransferase subunit C (100 aa).

The protein belongs to the GatC family. Heterotrimer of A, B and C subunits.

The enzyme catalyses L-glutamyl-tRNA(Gln) + L-glutamine + ATP + H2O = L-glutaminyl-tRNA(Gln) + L-glutamate + ADP + phosphate + H(+). It carries out the reaction L-aspartyl-tRNA(Asn) + L-glutamine + ATP + H2O = L-asparaginyl-tRNA(Asn) + L-glutamate + ADP + phosphate + 2 H(+). Functionally, allows the formation of correctly charged Asn-tRNA(Asn) or Gln-tRNA(Gln) through the transamidation of misacylated Asp-tRNA(Asn) or Glu-tRNA(Gln) in organisms which lack either or both of asparaginyl-tRNA or glutaminyl-tRNA synthetases. The reaction takes place in the presence of glutamine and ATP through an activated phospho-Asp-tRNA(Asn) or phospho-Glu-tRNA(Gln). In Staphylococcus haemolyticus (strain JCSC1435), this protein is Aspartyl/glutamyl-tRNA(Asn/Gln) amidotransferase subunit C.